A 211-amino-acid polypeptide reads, in one-letter code: Pyridoxine/pyridoxamine 5'-phosphate oxidase (211 aa).

Residues 7 to 10 (RREY) and lysine 65 each bind substrate. FMN contacts are provided by residues 60-65 (RIVLLK), 75-76 (YT), arginine 81, lysine 82, and glutamine 104. Substrate contacts are provided by tyrosine 122, arginine 126, and serine 130. FMN is bound by residues 139-140 (QS) and tryptophan 184. 190–192 (RLH) contacts substrate. Residue arginine 194 coordinates FMN.

Belongs to the pyridoxamine 5'-phosphate oxidase family. Homodimer. FMN serves as cofactor.

It carries out the reaction pyridoxamine 5'-phosphate + O2 + H2O = pyridoxal 5'-phosphate + H2O2 + NH4(+). The enzyme catalyses pyridoxine 5'-phosphate + O2 = pyridoxal 5'-phosphate + H2O2. Its pathway is cofactor metabolism; pyridoxal 5'-phosphate salvage; pyridoxal 5'-phosphate from pyridoxamine 5'-phosphate: step 1/1. It functions in the pathway cofactor metabolism; pyridoxal 5'-phosphate salvage; pyridoxal 5'-phosphate from pyridoxine 5'-phosphate: step 1/1. In terms of biological role, catalyzes the oxidation of either pyridoxine 5'-phosphate (PNP) or pyridoxamine 5'-phosphate (PMP) into pyridoxal 5'-phosphate (PLP). The sequence is that of Pyridoxine/pyridoxamine 5'-phosphate oxidase from Vibrio campbellii (strain ATCC BAA-1116).